A 493-amino-acid polypeptide reads, in one-letter code: 3-ketoacyl-CoA synthase 16 (493 aa).

The first 35 residues, M1 to A35, serve as a signal peptide directing secretion. A helical membrane pass occupies residues N52–T74. Residues Y71–F366 form the FAE domain. Active-site residues include C221, H300, H384, H388, H417, and N421.

Belongs to the thiolase-like superfamily. Chalcone/stilbene synthases family. As to expression, expressed in siliques.

It localises to the membrane. It catalyses the reaction a very-long-chain acyl-CoA + malonyl-CoA + H(+) = a very-long-chain 3-oxoacyl-CoA + CO2 + CoA. It functions in the pathway lipid metabolism; fatty acid biosynthesis. This Arabidopsis thaliana (Mouse-ear cress) protein is 3-ketoacyl-CoA synthase 16.